Reading from the N-terminus, the 157-residue chain is NADPH-dependent 7-cyano-7-deazaguanine reductase (157 aa).

Residue Cys55 is the Thioimide intermediate of the active site. The active-site Proton donor is Asp62. Substrate is bound by residues Val77 to Ser79 and His96 to Glu97.

It belongs to the GTP cyclohydrolase I family. QueF type 1 subfamily.

The protein resides in the cytoplasm. It carries out the reaction 7-aminomethyl-7-carbaguanine + 2 NADP(+) = 7-cyano-7-deazaguanine + 2 NADPH + 3 H(+). It functions in the pathway tRNA modification; tRNA-queuosine biosynthesis. In terms of biological role, catalyzes the NADPH-dependent reduction of 7-cyano-7-deazaguanine (preQ0) to 7-aminomethyl-7-deazaguanine (preQ1). The protein is NADPH-dependent 7-cyano-7-deazaguanine reductase of Neisseria meningitidis serogroup A / serotype 4A (strain DSM 15465 / Z2491).